We begin with the raw amino-acid sequence, 763 residues long: MSELLSFALFLASVLIYAWKAGRNTWWFAATLTVLGLFVVLNITLFASDYFTGDGINDAVLYTLTNSLTGAGVSKYILPGIGIVLGLTAVFGALGWILRRRRHHPHHFGYSLLALLLALGSVDASPAFRQITELVKSQSRDGDPDFAAYYKEPSKTIPDPKLNLVYIYGESLERTYFDNEAFPDLTPELGALKNEGLDFSHTQQLPGTDYTIAGMVASQCGIPLFAPFEGNASASVSSFFPQNICLGDILKNSGYQNYFVQGANLRFAGKDVFLKSHGFDHLYGSEELKSVVADPHYRNDWGFYDDTVLDEAWKKFEELSRSSQRFSLFTLTVDTHHPDGFISRTCNRKKYDFDGKPNQSFSAVSCSQENIAAFINKIKASPWFKDTVIVVSSDHLAMNNTAWKYLNKQDRNNLFFVIRGDKPQQETLAVKRNTMDNGATVLDILGGDNYLGLGRSSLSGQSMSEIFLNIKEKTLAWKPDIIRLWKFPKEMKEFTIDQQKNMIAFSGSHFRLPLLLRVSDKRVEPLPESEYSAPLRFQLADFAPRDNFVWVDRCYKMAQLWAPELALSTDWCVSQGQLGGQQIVQHVDKTTWQGKTAFKDTVIDMARYKGNVDTLKIVDNDIRYKADSFIFNVAGAPEEVKQFSGISRPESWGRWSNAQLGDEVKIEYKHPLPKKFDLVITAKAYGNNASRPIPVRVGNEEQTLVLGNEVTTTTLHFDNPTDADTLVIVPPEPVSTNEGNILGHSPRKLGIGMVEIKVVEREG.

4 helical membrane passes run 1–21, 26–46, 77–97, and 108–128; these read MSEL…AWKA, WWFA…ITLF, ILPG…LGWI, and FGYS…SPAF.

Belongs to the OpgB family.

The protein localises to the cell inner membrane. It carries out the reaction a phosphatidylglycerol + a membrane-derived-oligosaccharide D-glucose = a 1,2-diacyl-sn-glycerol + a membrane-derived-oligosaccharide 6-(glycerophospho)-D-glucose.. It participates in glycan metabolism; osmoregulated periplasmic glucan (OPG) biosynthesis. Transfers a phosphoglycerol residue from phosphatidylglycerol to the membrane-bound nascent glucan backbones. The sequence is that of Phosphoglycerol transferase I from Escherichia coli (strain 55989 / EAEC).